Consider the following 345-residue polypeptide: Ketol-acid reductoisomerase (NADP(+)) (345 aa).

One can recognise a KARI N-terminal Rossmann domain in the interval 2–182 (AKVYHDSSAD…GTTRAGVLET (181 aa)). Residues 25–28 (YGSQ), arginine 48, serine 51, serine 53, and 83–86 (DTEQ) contribute to the NADP(+) site. Histidine 108 is a catalytic residue. Residue glycine 134 participates in NADP(+) binding. A KARI C-terminal knotted domain is found at 183 to 328 (TFKEETETDL…AQLRDMMTFL (146 aa)). 4 residues coordinate Mg(2+): aspartate 191, glutamate 195, glutamate 227, and glutamate 231. Serine 252 is a binding site for substrate.

It belongs to the ketol-acid reductoisomerase family. Mg(2+) is required as a cofactor.

The enzyme catalyses (2R)-2,3-dihydroxy-3-methylbutanoate + NADP(+) = (2S)-2-acetolactate + NADPH + H(+). It carries out the reaction (2R,3R)-2,3-dihydroxy-3-methylpentanoate + NADP(+) = (S)-2-ethyl-2-hydroxy-3-oxobutanoate + NADPH + H(+). Its pathway is amino-acid biosynthesis; L-isoleucine biosynthesis; L-isoleucine from 2-oxobutanoate: step 2/4. It functions in the pathway amino-acid biosynthesis; L-valine biosynthesis; L-valine from pyruvate: step 2/4. Involved in the biosynthesis of branched-chain amino acids (BCAA). Catalyzes an alkyl-migration followed by a ketol-acid reduction of (S)-2-acetolactate (S2AL) to yield (R)-2,3-dihydroxy-isovalerate. In the isomerase reaction, S2AL is rearranged via a Mg-dependent methyl migration to produce 3-hydroxy-3-methyl-2-ketobutyrate (HMKB). In the reductase reaction, this 2-ketoacid undergoes a metal-dependent reduction by NADPH to yield (R)-2,3-dihydroxy-isovalerate. The chain is Ketol-acid reductoisomerase (NADP(+)) from Koribacter versatilis (strain Ellin345).